The following is a 346-amino-acid chain: Glycerol-3-phosphate dehydrogenase [NAD(P)+] (346 aa).

Residues Ser-15, Trp-16, Arg-36, and Lys-110 each contribute to the NADPH site. Residues Lys-110, Gly-139, and Ser-141 each coordinate sn-glycerol 3-phosphate. Ala-143 is a binding site for NADPH. The sn-glycerol 3-phosphate site is built by Lys-194, Asp-247, Ser-257, Arg-258, and Asn-259. Residue Lys-194 is the Proton acceptor of the active site. Arg-258 is a binding site for NADPH. Val-282 and Glu-284 together coordinate NADPH.

It belongs to the NAD-dependent glycerol-3-phosphate dehydrogenase family.

Its subcellular location is the cytoplasm. It carries out the reaction sn-glycerol 3-phosphate + NAD(+) = dihydroxyacetone phosphate + NADH + H(+). The catalysed reaction is sn-glycerol 3-phosphate + NADP(+) = dihydroxyacetone phosphate + NADPH + H(+). It functions in the pathway membrane lipid metabolism; glycerophospholipid metabolism. Its function is as follows. Catalyzes the reduction of the glycolytic intermediate dihydroxyacetone phosphate (DHAP) to sn-glycerol 3-phosphate (G3P), the key precursor for phospholipid synthesis. The polypeptide is Glycerol-3-phosphate dehydrogenase [NAD(P)+] (Xylella fastidiosa (strain M23)).